The primary structure comprises 294 residues: 4-hydroxy-tetrahydrodipicolinate synthase (294 aa).

Pyruvate is bound at residue Thr45. Tyr133 (proton donor/acceptor) is an active-site residue. Residue Lys162 is the Schiff-base intermediate with substrate of the active site. Ile204 serves as a coordination point for pyruvate.

This sequence belongs to the DapA family. Homotetramer; dimer of dimers.

Its subcellular location is the cytoplasm. The enzyme catalyses L-aspartate 4-semialdehyde + pyruvate = (2S,4S)-4-hydroxy-2,3,4,5-tetrahydrodipicolinate + H2O + H(+). It functions in the pathway amino-acid biosynthesis; L-lysine biosynthesis via DAP pathway; (S)-tetrahydrodipicolinate from L-aspartate: step 3/4. Catalyzes the condensation of (S)-aspartate-beta-semialdehyde [(S)-ASA] and pyruvate to 4-hydroxy-tetrahydrodipicolinate (HTPA). This chain is 4-hydroxy-tetrahydrodipicolinate synthase, found in Bartonella quintana (strain Toulouse) (Rochalimaea quintana).